The primary structure comprises 156 residues: Small ribosomal subunit protein uS7 (156 aa).

It belongs to the universal ribosomal protein uS7 family. Part of the 30S ribosomal subunit. Contacts proteins S9 and S11.

In terms of biological role, one of the primary rRNA binding proteins, it binds directly to 16S rRNA where it nucleates assembly of the head domain of the 30S subunit. Is located at the subunit interface close to the decoding center, probably blocks exit of the E-site tRNA. This is Small ribosomal subunit protein uS7 (rspG) from Streptomyces coelicolor (strain ATCC BAA-471 / A3(2) / M145).